The primary structure comprises 526 residues: tRNA-2-methylthio-N(6)-dimethylallyladenosine synthase (526 aa).

The interval 1–24 is disordered; sequence MTQQLNHAKVNQHPGQATLPETAE. The MTTase N-terminal domain maps to 28–144; it reads RTYEVKTYGC…LPTLLQRAEH (117 aa). The [4Fe-4S] cluster site is built by C37, C73, C107, C181, C185, and C188. In terms of domain architecture, Radical SAM core spans 167–403; sequence RESAYAGWVS…MVVQEQVCEE (237 aa). The TRAM domain occupies 406-477; the sequence is QKLIGTTVEL…PFFLIADSGV (72 aa).

This sequence belongs to the methylthiotransferase family. MiaB subfamily. As to quaternary structure, monomer. The cofactor is [4Fe-4S] cluster.

The protein localises to the cytoplasm. The catalysed reaction is N(6)-dimethylallyladenosine(37) in tRNA + (sulfur carrier)-SH + AH2 + 2 S-adenosyl-L-methionine = 2-methylsulfanyl-N(6)-dimethylallyladenosine(37) in tRNA + (sulfur carrier)-H + 5'-deoxyadenosine + L-methionine + A + S-adenosyl-L-homocysteine + 2 H(+). Catalyzes the methylthiolation of N6-(dimethylallyl)adenosine (i(6)A), leading to the formation of 2-methylthio-N6-(dimethylallyl)adenosine (ms(2)i(6)A) at position 37 in tRNAs that read codons beginning with uridine. In Corynebacterium glutamicum (strain R), this protein is tRNA-2-methylthio-N(6)-dimethylallyladenosine synthase.